Reading from the N-terminus, the 150-residue chain is 3-dehydroquinate dehydratase (150 aa).

The active-site Proton acceptor is the Y26. Substrate contacts are provided by N75, H81, and D88. The active-site Proton donor is H101. Substrate-binding positions include 102–103 and R112; that span reads LS.

The protein belongs to the type-II 3-dehydroquinase family. Homododecamer.

The enzyme catalyses 3-dehydroquinate = 3-dehydroshikimate + H2O. It functions in the pathway metabolic intermediate biosynthesis; chorismate biosynthesis; chorismate from D-erythrose 4-phosphate and phosphoenolpyruvate: step 3/7. In terms of biological role, catalyzes a trans-dehydration via an enolate intermediate. This chain is 3-dehydroquinate dehydratase, found in Shewanella loihica (strain ATCC BAA-1088 / PV-4).